The primary structure comprises 353 residues: uncharacterized protein (353 aa).

The segment at 69-106 (ISSATPSSTPPATRASSRLQPPKGHQAGGSNSQQQQPS) is disordered. Positions 70–86 (SSATPSSTPPATRASSR) are enriched in low complexity. The stretch at 319 to 353 (GENKEKKMREMSRVYREMTRQMDDTRRDLDRLNQG) forms a coiled coil.

This is an uncharacterized protein from Gibberella zeae (strain ATCC MYA-4620 / CBS 123657 / FGSC 9075 / NRRL 31084 / PH-1) (Wheat head blight fungus).